A 486-amino-acid polypeptide reads, in one-letter code: MTTFYTVVNWLVILGYWLLIAGVTLRILMKRRAVPSAMAWLLIIYILPLVGIIAYLSFGELHLGKRRAERARAMWPSTAKWLNDLKACKHIFAEDNSPVAESLFKLCERRQGIGGVKGNQLQLLTESDDVMQALIRDIQLARHNIEMVFYIWQPGGMADSVAESLMAAARRGVHCRLMLDSAGSVAFFRSPWAAMMRNAGIEVVEALKVNLMRVFLRRMDLRQHRKMVMIDNYIAYTGSMNMVDPRYFKQDSGVGQWIDLMARMEGPVATSMGIVYSCDWEIETGKRILPPPPDVNIMPFEEASGHTIHTIASGPGFPEDLIHQALLTAAYAAKEHLIMTTPYFVPSDDLLHAICTAAQRGVDVSIILPRKNDSLLVGWASRAFFTELLAAGVKIYQFEGGLLHTKSVLVDGELSLVGTVNLDMRSLWLNFEITLVIDDAGFGSDLAAVQDDYISRSRLLDARLWLKRPLWQRIAERLFYFFSPLL.

2 helical membrane-spanning segments follow: residues 3–23 (TFYT…IAGV) and 38–58 (MAWL…YLSF). PLD phosphodiesterase domains lie at 219-246 (MDLR…VDPR) and 399-426 (EGGL…DMRS). Residues H224, K226, D231, H404, K406, and D411 contribute to the active site.

It belongs to the phospholipase D family. Cardiolipin synthase subfamily. ClsA sub-subfamily.

It localises to the cell inner membrane. The enzyme catalyses 2 a 1,2-diacyl-sn-glycero-3-phospho-(1'-sn-glycerol) = a cardiolipin + glycerol. In terms of biological role, catalyzes the reversible phosphatidyl group transfer from one phosphatidylglycerol molecule to another to form cardiolipin (CL) (diphosphatidylglycerol) and glycerol. This chain is Cardiolipin synthase A, found in Klebsiella pneumoniae subsp. pneumoniae (strain ATCC 700721 / MGH 78578).